Consider the following 329-residue polypeptide: Vacuolar protein sorting-associated protein 26B-like (329 aa).

Belongs to the VPS26 family.

The protein localises to the cytoplasm. The protein resides in the membrane. Its function is as follows. Probable component of the retromer complex, a complex required to retrieve lysosomal enzyme receptors (IGF2R and M6PR) from endosomes to the trans-Golgi network. This chain is Vacuolar protein sorting-associated protein 26B-like (vps26bl), found in Danio rerio (Zebrafish).